A 257-amino-acid polypeptide reads, in one-letter code: Imidazole glycerol phosphate synthase subunit HisF (257 aa).

Active-site residues include Asp11 and Asp130.

This sequence belongs to the HisA/HisF family. In terms of assembly, heterodimer of HisH and HisF.

The protein resides in the cytoplasm. It catalyses the reaction 5-[(5-phospho-1-deoxy-D-ribulos-1-ylimino)methylamino]-1-(5-phospho-beta-D-ribosyl)imidazole-4-carboxamide + L-glutamine = D-erythro-1-(imidazol-4-yl)glycerol 3-phosphate + 5-amino-1-(5-phospho-beta-D-ribosyl)imidazole-4-carboxamide + L-glutamate + H(+). It functions in the pathway amino-acid biosynthesis; L-histidine biosynthesis; L-histidine from 5-phospho-alpha-D-ribose 1-diphosphate: step 5/9. Functionally, IGPS catalyzes the conversion of PRFAR and glutamine to IGP, AICAR and glutamate. The HisF subunit catalyzes the cyclization activity that produces IGP and AICAR from PRFAR using the ammonia provided by the HisH subunit. This chain is Imidazole glycerol phosphate synthase subunit HisF, found in Shewanella denitrificans (strain OS217 / ATCC BAA-1090 / DSM 15013).